We begin with the raw amino-acid sequence, 206 residues long: MCIDLIRFELQQAAQILNQFMSDDKNLDPVRQAAFLLVDAFKAGKKVISCGNGGSHCDAMHFAEELTGRYRENRPGYPAIAISDVSHISCVGNDFGYEHVFSRYVDSVGCEGDVLFALSTSGNSKNIIKAIQSARQKKMKVIILTGQMGGAMSNLADVKICVPHQGYADRIQEIHIKIIHILILLIEQKMDINNESLTFLKEEGHV.

Residues 37-195 (LVDAFKAGKK…IEQKMDINNE (159 aa)) enclose the SIS domain. Substrate is bound at residue 52–54 (NGG). 2 residues coordinate Zn(2+): histidine 61 and glutamate 65. Substrate contacts are provided by residues glutamate 65, 93-94 (ND), 119-121 (STS), serine 124, and glutamine 172. Zn(2+) contacts are provided by glutamine 172 and histidine 180.

This sequence belongs to the SIS family. GmhA subfamily. As to quaternary structure, homotetramer. The cofactor is Zn(2+).

The protein localises to the cytoplasm. It carries out the reaction 2 D-sedoheptulose 7-phosphate = D-glycero-alpha-D-manno-heptose 7-phosphate + D-glycero-beta-D-manno-heptose 7-phosphate. It functions in the pathway carbohydrate biosynthesis; D-glycero-D-manno-heptose 7-phosphate biosynthesis; D-glycero-alpha-D-manno-heptose 7-phosphate and D-glycero-beta-D-manno-heptose 7-phosphate from sedoheptulose 7-phosphate: step 1/1. Its function is as follows. Catalyzes the isomerization of sedoheptulose 7-phosphate in D-glycero-D-manno-heptose 7-phosphate. This chain is Phosphoheptose isomerase, found in Hamiltonella defensa subsp. Acyrthosiphon pisum (strain 5AT).